The chain runs to 341 residues: MPFPFGKSHKSPADIVKNLKESMAVLEKQDISDKKAEKATEEVSKNLVAMKEILYGTNEKEPQTEAVAQLAQELYNSGLLSTLVADLQLIDFEGKKDVAQIFNNILRRQIGTRTPTVEYICTQQNILFMLLKGYESPEIALNCGIMLRECIRHEPLAKIILWSEQFYDFFRYVEMSTFDIASDAFATFKDLLTRHKLLSAEFLEQHYDRFFSEYEKLLHSENYVTKRQSLKLLGELLLDRHNFTIMTKYISKPENLKLMMNLLRDKSRNIQFEAFHVFKVFVANPNKTQPILDILLKNQAKLIEFLSKFQNDRTEDEQFNDEKTYLVKQIRDLKRPAQQEA.

The protein belongs to the Mo25 family. Component of a trimeric complex composed of STK11/LKB1, STRAD (STRADA or STRADB) and CAB39/MO25 (CAB39/MO25alpha or CAB39L/MO25beta): the complex tethers STK11/LKB1 in the cytoplasm and stimulates its catalytic activity.

Its subcellular location is the cytoplasm. Component of a complex that binds and activates STK11/LKB1. In the complex, required to stabilize the interaction between CAB39/MO25 (CAB39/MO25alpha or CAB39L/MO25beta) and STK11/LKB1. The chain is Calcium-binding protein 39 (CAB39) from Bos taurus (Bovine).